Reading from the N-terminus, the 472-residue chain is 2-methylcitrate synthase, mitochondrial (472 aa).

A mitochondrion-targeting transit peptide spans 1-29; sequence MALNLTTSRRALGSLKPLTRAAFVGARGY. 2 residues coordinate CoA: R75 and K193. Position 271 (H271) interacts with oxaloacetate. L306 contributes to the CoA binding site. H307 is an active-site residue. Residues V348, G350, and Y351 each coordinate CoA. Positions 353 and 362 each coordinate oxaloacetate. H353 is a catalytic residue. CoA is bound by residues T402, K403, and N408. D410 is an active-site residue. Oxaloacetate contacts are provided by R436 and R456.

This sequence belongs to the citrate synthase family. As to quaternary structure, homodimer.

Its subcellular location is the mitochondrion matrix. The enzyme catalyses propanoyl-CoA + oxaloacetate + H2O = (2S,3S)-2-methylcitrate + CoA + H(+). It catalyses the reaction oxaloacetate + acetyl-CoA + H2O = citrate + CoA + H(+). Its pathway is organic acid metabolism; propanoate degradation. Component of the methylcitrate cycle that catalyzes the synthesis of (2S,3S)-2-methylcitrate from propionyl-CoA and oxaloacetate. Plays an important role in detoxification of propionyl-CoA, an inhibitor of both primary and secondary metabolism. Also has citrate synthase activity using as substrates acetyl-CoA and oxaloacetate. This is 2-methylcitrate synthase, mitochondrial from Fusarium solani (Filamentous fungus).